Reading from the N-terminus, the 178-residue chain is Cytochrome b6-f complex iron-sulfur subunit (178 aa).

A helical membrane pass occupies residues 20–42 (LLTFGTATGVALGALYPVANYFM). The Rieske domain occupies 65–161 (KTGWLANHQA…VDVDDDAVLV (97 aa)). Residues cysteine 107, histidine 109, cysteine 125, and histidine 128 each contribute to the [2Fe-2S] cluster site. A disulfide bridge links cysteine 112 with cysteine 127.

Belongs to the Rieske iron-sulfur protein family. The 4 large subunits of the cytochrome b6-f complex are cytochrome b6, subunit IV (17 kDa polypeptide, PetD), cytochrome f and the Rieske protein, while the 4 small subunits are PetG, PetL, PetM and PetN. The complex functions as a dimer. [2Fe-2S] cluster serves as cofactor.

The protein resides in the cellular thylakoid membrane. It carries out the reaction 2 oxidized [plastocyanin] + a plastoquinol + 2 H(+)(in) = 2 reduced [plastocyanin] + a plastoquinone + 4 H(+)(out). Functionally, component of the cytochrome b6-f complex, which mediates electron transfer between photosystem II (PSII) and photosystem I (PSI), cyclic electron flow around PSI, and state transitions. The chain is Cytochrome b6-f complex iron-sulfur subunit from Prochlorococcus marinus (strain MIT 9515).